Consider the following 665-residue polypeptide: Golgi-associated RAB2B interactor protein 3 (665 aa).

3 disordered regions span residues 211-240 (EIRG…AGGE), 272-296 (AAAG…GTAG), and 480-590 (SEGY…GSVS). Positions 219–232 (NSRPQSSPTVSEAT) are enriched in polar residues. Residues 499–513 (EAKEKRERREKDRTS) are compositionally biased toward basic and acidic residues. 2 stretches are compositionally biased toward basic residues: residues 514 to 538 (SRKS…RKTS) and 554 to 566 (GHGR…HSSS). Positions 515 to 531 (RKSSHHRRTGMSRHSSK) match the Bipartite nuclear localization signal motif. Ser-652 is subject to Phosphoserine.

This sequence belongs to the GARIN family. Interacts (via N-terminus) with RAB2B (in GTP-bound form). Interacts with FRG1. As to expression, expressed in adult spermatocytes and spermatids.

The protein resides in the golgi apparatus. Its subcellular location is the nucleus. The protein localises to the cajal body. In terms of biological role, may be involved in RNA biogenesis. This chain is Golgi-associated RAB2B interactor protein 3, found in Mus musculus (Mouse).